A 186-amino-acid polypeptide reads, in one-letter code: Lipid A palmitoyltransferase PagP (186 aa).

Residues 1 to 25 (MNVSKYVAIFSFVFIQLISVGKVFA) form the signal peptide. Residues His58, Asp101, and Ser102 contribute to the active site.

Belongs to the lipid A palmitoyltransferase family. In terms of assembly, homodimer.

Its subcellular location is the cell outer membrane. The catalysed reaction is lipid A (E. coli) + a 1-hexadecanoyl-2-acyl-sn-glycero-3-phosphocholine = hepta-acyl lipid A (E. coli) + a 2-acyl-sn-glycero-3-phosphocholine. It carries out the reaction lipid IIA + a 1-hexadecanoyl-2-acyl-sn-glycero-3-phosphocholine = lipid IIB + a 2-acyl-sn-glycero-3-phosphocholine. The enzyme catalyses lipid IVA (E. coli) + a 1-hexadecanoyl-2-acyl-sn-glycero-3-phosphocholine = lipid IVB (E. coli) + a 2-acyl-sn-glycero-3-phosphocholine. Functionally, transfers a palmitate residue from the sn-1 position of a phospholipid to the N-linked hydroxymyristate on the proximal unit of lipid A or its precursors. This chain is Lipid A palmitoyltransferase PagP, found in Escherichia coli (strain ATCC 55124 / KO11FL).